We begin with the raw amino-acid sequence, 414 residues long: Putative truncated GMC-type inactive oxidoreductase R832 (414 aa).

Positions 1–20 are cleaved as a signal peptide; it reads MNPTKLFLVFVAFAFAIINA. 38 to 67 contacts FAD; that stretch reads DYIIVGSGPGGSRAVQQCIAKGHKCTLVER.

This sequence belongs to the GMC oxidoreductase family. Requires FAD as cofactor.

This chain is Putative truncated GMC-type inactive oxidoreductase R832, found in Acanthamoeba polyphaga (Amoeba).